A 385-amino-acid polypeptide reads, in one-letter code: Probable caffeine synthase 4 (385 aa).

7 residues coordinate S-adenosyl-L-homocysteine: Y18, C62, N67, D101, L102, S140, and F141. Positions 158, 161, and 162 each coordinate caffeine. Mg(2+) is bound at residue N179. T238 is a binding site for caffeine. D261, F263, and N264 together coordinate Mg(2+). Y369 is a binding site for caffeine.

The protein belongs to the methyltransferase superfamily. Type-7 methyltransferase family. Mg(2+) is required as a cofactor. In terms of tissue distribution, expressed in roots, stems, young and old leaves.

It functions in the pathway alkaloid biosynthesis. May be involved in the biosynthesis of caffeine. This chain is Probable caffeine synthase 4, found in Coffea arabica (Arabian coffee).